The sequence spans 96 residues: Protein E7 (96 aa).

Positions 1 to 42 (MIGNQPNVNNLDVNLEELVLPVSLLADEELSPDGDPEEEEHY) are E7 terminal domain. Residues 50-86 (CKPCGAGVRFTIIATPSAVITLRQLLLQEVFLTCLRC) fold into a zinc finger. Positions 68–76 (VITLRQLLL) match the Nuclear export signal motif.

Belongs to the papillomaviridae E7 protein family. Homodimer. Homooligomer. Interacts with host RB1; this interaction induces dissociation of RB1-E2F1 complex thereby disrupting RB1 activity. Interacts with host EP300; this interaction represses EP300 transcriptional activity. Interacts with protein E2; this interaction inhibits E7 oncogenic activity. Interacts with host TMEM173/STING; this interaction impairs the ability of TMEM173/STING to sense cytosolic DNA and promote the production of type I interferon (IFN-alpha and IFN-beta). Post-translationally, highly phosphorylated.

The protein resides in the host cytoplasm. Its subcellular location is the host nucleus. Plays a role in viral genome replication by driving entry of quiescent cells into the cell cycle. Stimulation of progression from G1 to S phase allows the virus to efficiently use the cellular DNA replicating machinery to achieve viral genome replication. E7 protein has both transforming and trans-activating activities. Induces the disassembly of the E2F1 transcription factor from RB1, with subsequent transcriptional activation of E2F1-regulated S-phase genes. Interferes with host histone deacetylation mediated by HDAC1 and HDAC2, leading to transcription activation. Also plays a role in the inhibition of both antiviral and antiproliferative functions of host interferon alpha. Interaction with host TMEM173/STING impairs the ability of TMEM173/STING to sense cytosolic DNA and promote the production of type I interferon (IFN-alpha and IFN-beta). In Homo sapiens (Human), this protein is Protein E7.